The primary structure comprises 356 residues: Methylthioribose-1-phosphate isomerase (356 aa).

Substrate contacts are provided by residues 53 to 55 (RGA), R97, and Q203. The active-site Proton donor is D244. A substrate-binding site is contributed by 254–255 (NK).

The protein belongs to the eIF-2B alpha/beta/delta subunits family. MtnA subfamily.

The catalysed reaction is 5-(methylsulfanyl)-alpha-D-ribose 1-phosphate = 5-(methylsulfanyl)-D-ribulose 1-phosphate. Its pathway is amino-acid biosynthesis; L-methionine biosynthesis via salvage pathway; L-methionine from S-methyl-5-thio-alpha-D-ribose 1-phosphate: step 1/6. Functionally, catalyzes the interconversion of methylthioribose-1-phosphate (MTR-1-P) into methylthioribulose-1-phosphate (MTRu-1-P). The polypeptide is Methylthioribose-1-phosphate isomerase (Rhodopirellula baltica (strain DSM 10527 / NCIMB 13988 / SH1)).